We begin with the raw amino-acid sequence, 202 residues long: Imidazoleglycerol-phosphate dehydratase (202 aa).

Belongs to the imidazoleglycerol-phosphate dehydratase family.

The protein resides in the cytoplasm. The catalysed reaction is D-erythro-1-(imidazol-4-yl)glycerol 3-phosphate = 3-(imidazol-4-yl)-2-oxopropyl phosphate + H2O. Its pathway is amino-acid biosynthesis; L-histidine biosynthesis; L-histidine from 5-phospho-alpha-D-ribose 1-diphosphate: step 6/9. The protein is Imidazoleglycerol-phosphate dehydratase of Rhizobium meliloti (strain 1021) (Ensifer meliloti).